A 1025-amino-acid chain; its full sequence is Glycine dehydrogenase (decarboxylating), mitochondrial (1025 aa).

A mitochondrion-targeting transit peptide spans 1-35 (MQLCARAWGLRLGRGAGGGHRLARGTGLSWAQRSR). The disordered stretch occupies residues 16–51 (AGGGHRLARGTGLSWAQRSRDSSGGGGGGGGGDRGA). Positions 38-50 (SGGGGGGGGGDRG) are enriched in gly residues. Residues Lys452, Lys519, Lys653, and Lys669 each carry the N6-acetyllysine modification. The residue at position 759 (Lys759) is an N6-(pyridoxal phosphate)lysine.

The protein belongs to the GcvP family. Interacts with GCSH. Homodimer. The glycine cleavage system is composed of four proteins: P (GLDC), T (GCST), L (DLD) and H (GCSH). Pyridoxal 5'-phosphate is required as a cofactor.

The protein localises to the mitochondrion. It carries out the reaction N(6)-[(R)-lipoyl]-L-lysyl-[glycine-cleavage complex H protein] + glycine + H(+) = N(6)-[(R)-S(8)-aminomethyldihydrolipoyl]-L-lysyl-[glycine-cleavage complex H protein] + CO2. With respect to regulation, stimulated by lipoic acid. Inhibited in presence of methylamine. Functionally, the glycine cleavage system catalyzes the degradation of glycine. The P protein (GLDC) binds the alpha-amino group of glycine through its pyridoxal phosphate cofactor; CO(2) is released and the remaining methylamine moiety is then transferred to the lipoamide cofactor of the H protein (GCSH). The polypeptide is Glycine dehydrogenase (decarboxylating), mitochondrial (Mus musculus (Mouse)).